The following is a 716-amino-acid chain: MPKTAKPKKPVDVAELTKAQAKVEWKRLALELEVHDRLYYQDDAPKISDAEYDELRRRFNAIETRFPELVSSESPSQKVGASPSGRFKKVRHAVPMLSLDNAFAEEDVRDFVGRIARFLKLADDRIDFSAEPKIDGLSMSLRYEGGELVTAATRGDGAEGEDVTANIRTLKDVPQKLHGRNWPDVCEVRGEVYMTKQAFLALNERQKEAGDTIFANPRNSAAGSLRQKDPAITASRPLGFFAYAWGEISGTPPAETQTGMIKWFEQCGFTTNPLTRLCHSVEELIAFHRSIEEQRAELDYDIDGVVYKVDRIDWQERLGFVSRTPRWAIAHKFPAERAMTVLKDIEIQVGRTGSLTPVGKLEPVGVGGVIVQNVTLHNEDYIKGIGNKGEVLREGRDIRIGDTVVIQRAGDVIPQVVDVVIDKRPAQARPFHLPKTCPCPLHTDVVREETATGEEGSRARCTGEFACPYQKIEHLKLFASRRAFDIDGLGEKQIAFFFEQGWVKEPADIFTLQKRNAGLKLEEIEGYGETSVRNLFNAIDARREIALERFIYALGMRHVGETTALALARGYGSWDAFHEACLKVAAGDEEAIAEMDALDQIGDTVIKSVAAYFAEDHNRGIVERLTQEVKILDAEKPKRHSPIATKTVVFTGTLEKMTRDEAKATAERLGAKVSGSVSKKTDYVVAGPGAGSKLKEAQKHGVQVLTEDEWLQLIAE.

NAD(+) is bound by residues 49 to 53, 98 to 99, and Glu-131; these read DAEYD and SL. The active-site N6-AMP-lysine intermediate is Lys-133. 4 residues coordinate NAD(+): Arg-154, Glu-191, Lys-308, and Lys-332. Zn(2+)-binding residues include Cys-437, Cys-439, Cys-461, and Cys-467. Positions 638–716 constitute a BRCT domain; the sequence is KRHSPIATKT…EDEWLQLIAE (79 aa).

It belongs to the NAD-dependent DNA ligase family. LigA subfamily. Mg(2+) serves as cofactor. The cofactor is Mn(2+).

It carries out the reaction NAD(+) + (deoxyribonucleotide)n-3'-hydroxyl + 5'-phospho-(deoxyribonucleotide)m = (deoxyribonucleotide)n+m + AMP + beta-nicotinamide D-nucleotide.. Its function is as follows. DNA ligase that catalyzes the formation of phosphodiester linkages between 5'-phosphoryl and 3'-hydroxyl groups in double-stranded DNA using NAD as a coenzyme and as the energy source for the reaction. It is essential for DNA replication and repair of damaged DNA. The protein is DNA ligase of Bradyrhizobium sp. (strain BTAi1 / ATCC BAA-1182).